The sequence spans 283 residues: ATP synthase gamma chain (283 aa).

It belongs to the ATPase gamma chain family. F-type ATPases have 2 components, CF(1) - the catalytic core - and CF(0) - the membrane proton channel. CF(1) has five subunits: alpha(3), beta(3), gamma(1), delta(1), epsilon(1). CF(0) has three main subunits: a, b and c.

Its subcellular location is the cell membrane. In terms of biological role, produces ATP from ADP in the presence of a proton gradient across the membrane. The gamma chain is believed to be important in regulating ATPase activity and the flow of protons through the CF(0) complex. The chain is ATP synthase gamma chain from Clostridium perfringens (strain ATCC 13124 / DSM 756 / JCM 1290 / NCIMB 6125 / NCTC 8237 / Type A).